Consider the following 507-residue polypeptide: Transcription factor CP2 (507 aa).

The 240-residue stretch at 61 to 300 (ENKILPFQYV…SPGFNSSHNS (240 aa)) folds into the Grh/CP2 DB domain. The DNA-binding stretch occupies residues 133-395 (EHQQLEGWRW…LFNALKGRMV (263 aa)). Disordered regions lie at residues 240-268 (PKGA…YQPS) and 296-316 (SSHN…QPEP). Basic and acidic residues predominate over residues 241-265 (KGADRKQKTDREKMEKRTPQEKEKY).

The protein belongs to the grh/CP2 family. CP2 subfamily. As to quaternary structure, component of the SSP (stage selector protein) complex, which appears to be a heteromer of TFCP2 and 2 copies of NFE4.

It localises to the nucleus. May function as a transcription factor. This is Transcription factor CP2 (tfcp2) from Xenopus tropicalis (Western clawed frog).